Consider the following 699-residue polypeptide: D-(-)-3-hydroxybutyrate oligomer hydrolase (699 aa).

A signal peptide spans 1–33 (MTAIRGGSRRAPGLALALLGGVLLGACHGDENA). S311 functions as the Charge relay system in the catalytic mechanism.

Belongs to the D-(-)-3-hydroxybutyrate oligomer hydrolase family.

Its subcellular location is the secreted. It carries out the reaction (3R)-hydroxybutanoate dimer + H2O = 2 (R)-3-hydroxybutanoate + H(+). It functions in the pathway lipid metabolism; butanoate metabolism. Functionally, participates in the degradation of poly-3-hydroxybutyrate (PHB). It works downstream of poly(3-hydroxybutyrate) depolymerase, hydrolyzing D(-)-3-hydroxybutyrate oligomers of various length (3HB-oligomers) into 3HB-monomers. The chain is D-(-)-3-hydroxybutyrate oligomer hydrolase from Burkholderia pseudomallei (strain 1710b).